A 511-amino-acid chain; its full sequence is Acidic amino acid decarboxylase GADL1 (511 aa).

Lysine 323 carries the N6-(pyridoxal phosphate)lysine modification.

The protein belongs to the group II decarboxylase family. As to quaternary structure, homodimer. Requires pyridoxal 5'-phosphate as cofactor.

It catalyses the reaction L-aspartate + H(+) = beta-alanine + CO2. The catalysed reaction is 3-sulfino-L-alanine + H(+) = hypotaurine + CO2. Functionally, catalyzes the decarboxylation of L-aspartate, 3-sulfino-L-alanine (cysteine sulfinic acid), and L-cysteate to beta-alanine, hypotaurine and taurine, respectively. The preferred substrate is L-aspartate. Does not exhibit any decarboxylation activity toward glutamate. This Xenopus tropicalis (Western clawed frog) protein is Acidic amino acid decarboxylase GADL1 (gadl1).